Consider the following 615-residue polypeptide: 70 kDa neurofilament protein (615 aa).

Residues 1 to 31 (MSVTQKKTEISTTTTYEGESRPSSGMSGFSY) are disordered. The head stretch occupies residues 1 to 99 (MSVTQKKTEI…KANREREKQD (99 aa)). Residues 21 to 30 (RPSSGMSGFS) show a composition bias toward polar residues. One can recognise an IF rod domain in the interval 96–449 (EKQDMRDLNE…KLLEGEESRV (354 aa)). Residues 100-135 (MRDLNERFANYIEKVRFLEAQNKKLAGELEELKSKW) are coil 1A. Residues 136–145 (GKETSAIKEM) form a linker 1 region. Residues 146-284 (YETELEEARK…VHAQELKELA (139 aa)) form a coil 1B region. The tract at residues 285–303 (ALAYRDTTAENREFWRNEL) is linker 12. Positions 304 to 449 (AQAIRDIQQE…KLLEGEESRV (146 aa)) are coil 2. The tail stretch occupies residues 450–615 (GMKQIVEQVV…ANYTQNTVYQ (166 aa)). The region spanning 499-612 (AKTTYQRTSK…EDKANYTQNT (114 aa)) is the LTD domain.

The protein belongs to the intermediate filament family.

This is 70 kDa neurofilament protein from Doryteuthis pealeii (Longfin inshore squid).